We begin with the raw amino-acid sequence, 369 residues long: UDP-N-acetylenolpyruvoylglucosamine reductase (369 aa).

An FAD-binding PCMH-type domain is found at V29–S202. R176 is an active-site residue. The active-site Proton donor is S257. E361 is a catalytic residue.

Belongs to the MurB family. It depends on FAD as a cofactor.

It is found in the cytoplasm. The enzyme catalyses UDP-N-acetyl-alpha-D-muramate + NADP(+) = UDP-N-acetyl-3-O-(1-carboxyvinyl)-alpha-D-glucosamine + NADPH + H(+). It functions in the pathway cell wall biogenesis; peptidoglycan biosynthesis. Functionally, cell wall formation. This Mycobacterium tuberculosis (strain ATCC 25177 / H37Ra) protein is UDP-N-acetylenolpyruvoylglucosamine reductase.